A 534-amino-acid chain; its full sequence is Glucan endo-1,3-beta-glucosidase 12 (534 aa).

The N-terminal stretch at 1–24 (MGQRLNLVFWIFVSILAFLNFGMA) is a signal peptide. Residue glutamate 120 is the Proton donor of the active site. Asparagine 127 carries N-linked (GlcNAc...) asparagine glycosylation. The active-site Nucleophile is the glutamate 264. N-linked (GlcNAc...) asparagine glycosylation is found at asparagine 336, asparagine 357, and asparagine 375. The disordered stretch occupies residues 348-379 (ENTTPVSPTNSTTGTSPSPSSSPIINGNSTVT). Residues 349–377 (NTTPVSPTNSTTGTSPSPSSSPIINGNST) show a composition bias toward low complexity. Cysteine 392 and cysteine 455 are disulfide-bonded. Asparagine 485, asparagine 491, and asparagine 495 each carry an N-linked (GlcNAc...) asparagine glycan. The GPI-anchor amidated serine moiety is linked to residue serine 507. A propeptide spans 508–534 (STNEAFRQMVVAVSVLLPCFVVCSSIW) (removed in mature form).

The protein belongs to the glycosyl hydrolase 17 family. In terms of processing, contains two additional disulfide bonds.

Its subcellular location is the secreted. It is found in the cell wall. The protein resides in the cell membrane. The enzyme catalyses Hydrolysis of (1-&gt;3)-beta-D-glucosidic linkages in (1-&gt;3)-beta-D-glucans.. The sequence is that of Glucan endo-1,3-beta-glucosidase 12 from Arabidopsis thaliana (Mouse-ear cress).